The sequence spans 335 residues: Phosphate acyltransferase (335 aa).

The protein belongs to the PlsX family. In terms of assembly, homodimer. Probably interacts with PlsY.

Its subcellular location is the cytoplasm. It catalyses the reaction a fatty acyl-[ACP] + phosphate = an acyl phosphate + holo-[ACP]. It participates in lipid metabolism; phospholipid metabolism. In terms of biological role, catalyzes the reversible formation of acyl-phosphate (acyl-PO(4)) from acyl-[acyl-carrier-protein] (acyl-ACP). This enzyme utilizes acyl-ACP as fatty acyl donor, but not acyl-CoA. This Clostridium botulinum (strain ATCC 19397 / Type A) protein is Phosphate acyltransferase.